The chain runs to 228 residues: Interferon-induced transmembrane protein 10 (228 aa).

Residues 1 to 154 (MREGKRGPPC…PDTTEVNDYY (154 aa)) are Extracellular-facing. The disordered stretch occupies residues 29–49 (AQGPGQCPAPLGDPASTTDGA). The chain crosses the membrane as a helical span at residues 155 to 175 (LWSIFNFVYLNFCCLGFIALA). 2 S-palmitoyl cysteine lipidation sites follow: Cys-167 and Cys-168. The Cytoplasmic portion of the chain corresponds to 176 to 200 (YSLKVRDKKLLNDLNGAVEDAKTAR). The helical transmembrane segment at 201–221 (LFNITSSALAASCIILVFIFL) threads the bilayer. Topologically, residues 222–228 (RYPLTDY) are extracellular.

It belongs to the CD225/Dispanin family.

Its subcellular location is the cell membrane. This is Interferon-induced transmembrane protein 10 (IFITM10) from Homo sapiens (Human).